The following is an 849-amino-acid chain: Serrate RNA effector molecule homolog A (849 aa).

Disordered regions lie at residues 1 to 90 (MADS…HGSD) and 276 to 409 (KREA…PRPL). Basic and acidic residues-rich tracts occupy residues 8 to 73 (YDRR…RHDL), 276 to 306 (KREA…KPEN), and 314 to 342 (EKPV…ETRK). The segment covering 354 to 364 (SDDGSDSESDT) has biased composition (acidic residues). Residues 381 to 405 (RAEETPKKEEDTEKQKEKQKEDTVK) show a composition bias toward basic and acidic residues.

Belongs to the ARS2 family. Interacts ncbp1/cbp80.

It is found in the nucleus. The protein resides in the nucleoplasm. The protein localises to the cytoplasm. Functionally, acts as a mediator between the cap-binding complex (CBC) and the primary microRNAs (miRNAs) processing machinery during cell proliferation. Contributes to the stability and delivery of capped primary miRNA transcripts to the primary miRNA processing complex, thereby playing a role in RNA-mediated gene silencing (RNAi) by miRNAs. The sequence is that of Serrate RNA effector molecule homolog A (srrt-a) from Xenopus laevis (African clawed frog).